Here is a 242-residue protein sequence, read N- to C-terminus: Small ribosomal subunit protein uS3 (242 aa).

The 72-residue stretch at 39 to 110 (IRKFIHKKYG…QVRINVVEVE (72 aa)) folds into the KH type-2 domain. Positions 216-242 (QPMPVGAAPRRRASRRPQQFEDRSNEG) are disordered. Residues 233–242 (QQFEDRSNEG) are compositionally biased toward basic and acidic residues.

It belongs to the universal ribosomal protein uS3 family. As to quaternary structure, part of the 30S ribosomal subunit. Forms a tight complex with proteins S10 and S14.

Functionally, binds the lower part of the 30S subunit head. Binds mRNA in the 70S ribosome, positioning it for translation. This chain is Small ribosomal subunit protein uS3, found in Synechococcus sp. (strain CC9605).